The chain runs to 593 residues: DEAD-box ATP-dependent RNA helicase 18 (593 aa).

The Q motif motif lies at 16–44; sequence FSDLEPPLSGDIIEALNQSDFEFCTPVQA. A Helicase ATP-binding domain is found at 47–226; that stretch reads IPLLCSYKDV…KAGLRNPVRV (180 aa). 60-67 is an ATP binding site; the sequence is AATGSGKT. Positions 174–177 match the DEAD box motif; sequence DEAD. One can recognise a Helicase C-terminal domain in the interval 264 to 411; the sequence is QLVDLLIKNS…ERKCSEDASD (148 aa). Residues 506–524 are compositionally biased toward basic and acidic residues; it reads QRQQNLQVRKEKRQEEKKE. The interval 506–561 is disordered; that stretch reads QRQQNLQVRKEKRQEEKKEKGKRKRVDASASNDPKKASRKLTGKQRQTIQTAEDEE.

This sequence belongs to the DEAD box helicase family. DDX55/SPB4 subfamily.

It carries out the reaction ATP + H2O = ADP + phosphate + H(+). The protein is DEAD-box ATP-dependent RNA helicase 18 (RH18) of Arabidopsis thaliana (Mouse-ear cress).